The following is a 37-amino-acid chain: Photosystem I reaction center subunit VIII (37 aa).

A helical membrane pass occupies residues 9-29 (SIFVPLVGLVFPAIAMASLFL).

The protein belongs to the PsaI family.

It is found in the plastid. The protein localises to the chloroplast thylakoid membrane. May help in the organization of the PsaL subunit. The chain is Photosystem I reaction center subunit VIII from Cucumis sativus (Cucumber).